The primary structure comprises 371 residues: Leu/Ile/Val-binding protein homolog 1 (371 aa).

Positions 1-23 (MRKTLFSGVALAAVIAFGGSAWA) are cleaved as a signal peptide.

It belongs to the leucine-binding protein family.

Component of an amino-acid transport system. In Brucella abortus (strain 2308), this protein is Leu/Ile/Val-binding protein homolog 1.